The chain runs to 150 residues: Large ribosomal subunit protein uL13 (150 aa).

The interval 129–150 is disordered; sequence PEHPHSAQRPQTLQLNPAASSQ. Residues 136 to 150 are compositionally biased toward polar residues; the sequence is QRPQTLQLNPAASSQ.

It belongs to the universal ribosomal protein uL13 family. Part of the 50S ribosomal subunit.

In terms of biological role, this protein is one of the early assembly proteins of the 50S ribosomal subunit, although it is not seen to bind rRNA by itself. It is important during the early stages of 50S assembly. The chain is Large ribosomal subunit protein uL13 from Prochlorococcus marinus (strain MIT 9303).